We begin with the raw amino-acid sequence, 145 residues long: 3-dehydroquinate dehydratase (145 aa).

The active-site Proton acceptor is the Tyr-24. Substrate is bound by residues Asn-75, His-81, and Asp-88. The Proton donor role is filled by His-101. Residues 102 to 103 (LS) and Arg-112 each bind substrate.

Belongs to the type-II 3-dehydroquinase family. As to quaternary structure, homododecamer.

The catalysed reaction is 3-dehydroquinate = 3-dehydroshikimate + H2O. It functions in the pathway metabolic intermediate biosynthesis; chorismate biosynthesis; chorismate from D-erythrose 4-phosphate and phosphoenolpyruvate: step 3/7. Its function is as follows. Catalyzes a trans-dehydration via an enolate intermediate. This chain is 3-dehydroquinate dehydratase, found in Phenylobacterium zucineum (strain HLK1).